The following is a 214-amino-acid chain: Soluble inorganic pyrophosphatase (214 aa).

The substrate site is built by lysine 64, arginine 78, and tyrosine 90. 3 residues coordinate Mg(2+): aspartate 100, aspartate 105, and aspartate 137. Tyrosine 174 serves as a coordination point for substrate.

This sequence belongs to the PPase family. The cofactor is Mg(2+).

It is found in the cytoplasm. It carries out the reaction diphosphate + H2O = 2 phosphate + H(+). The protein is Soluble inorganic pyrophosphatase (IPP) of Oryza sativa subsp. indica (Rice).